The sequence spans 264 residues: Major prion protein (264 aa).

A signal peptide spans 1 to 24 (MVKSHIGSWILVLFVAMWSDVGLC). The tract at residues 25–41 (KKRPKPGGGWNTGGSRY) is interaction with ADGRG6. The tract at residues 25–241 (KKRPKPGGGW…ESQAYYQRGA (217 aa)) is interaction with GRB2, ERI3 and SYN1. Residues 28 to 119 (PKPGGGWNTG…WNKPSKPKTN (92 aa)) form a disordered region. Repeat copies occupy residues 54-62 (PQGGGGWGQ), 63-70 (PHGGGWGQ), 71-78 (PHGGGWGQ), 79-86 (PHGGGWGQ), 87-94 (PHGGGWGQ), and 95-103 (PHGGGGWGQ). A 6 X 8 AA tandem repeats of P-H-G-G-G-W-G-Q region spans residues 54–103 (PQGGGGWGQPHGGGWGQPHGGGWGQPHGGGWGQPHGGGWGQPHGGGGWGQ). Residues 55–107 (QGGGGWGQPHGGGWGQPHGGGWGQPHGGGWGQPHGGGWGQPHGGGGWGQGGTH) are compositionally biased toward gly residues. 12 residues coordinate Cu(2+): histidine 72, glycine 73, glycine 74, histidine 80, glycine 81, glycine 82, histidine 88, glycine 89, glycine 90, histidine 96, glycine 98, and glycine 99. Cysteine 190 and cysteine 225 are oxidised to a cystine. Asparagine 192 and asparagine 208 each carry an N-linked (GlcNAc...) asparagine glycan. Alanine 241 carries GPI-anchor amidated alanine lipidation. A propeptide spans 242–264 (SVILFSSPPVILLISFLIFLIVG) (removed in mature form).

The protein belongs to the prion family. Monomer and homodimer. Has a tendency to aggregate into amyloid fibrils containing a cross-beta spine, formed by a steric zipper of superposed beta-strands. Soluble oligomers may represent an intermediate stage on the path to fibril formation. Copper binding may promote oligomerization. Interacts with GRB2, APP, ERI3/PRNPIP and SYN1. Mislocalized cytosolically exposed PrP interacts with MGRN1; this interaction alters MGRN1 subcellular location and causes lysosomal enlargement. Interacts with APP. Interacts with KIAA1191. Interacts with ADGRG6.

Its subcellular location is the cell membrane. It is found in the golgi apparatus. Its function is as follows. Its primary physiological function is unclear. May play a role in neuronal development and synaptic plasticity. May be required for neuronal myelin sheath maintenance. May promote myelin homeostasis through acting as an agonist for ADGRG6 receptor. May play a role in iron uptake and iron homeostasis. Soluble oligomers are toxic to cultured neuroblastoma cells and induce apoptosis (in vitro). Association with GPC1 (via its heparan sulfate chains) targets PRNP to lipid rafts. Also provides Cu(2+) or Zn(2+) for the ascorbate-mediated GPC1 deaminase degradation of its heparan sulfate side chains. The sequence is that of Major prion protein (PRNP) from Bos indicus x Bos taurus (Hybrid cattle).